We begin with the raw amino-acid sequence, 346 residues long: 3-keto-steroid reductase ERG27 (346 aa).

L19, T42, and K48 together coordinate NADP(+). Active-site proton donor residues include S182 and Y205. The NADP(+) site is built by Y205, K209, and S241. Residue K209 is the Lowers pKa of active site Tyr of the active site. A helical transmembrane segment spans residues 242–262; the sequence is FSFFQYLNVFTYYGMLFLFYL. A glycan (N-linked (GlcNAc...) asparagine) is linked at N272.

Belongs to the short-chain dehydrogenases/reductases (SDR) family. ERG27 subfamily. As to quaternary structure, heterotetramer of ERG25, ERG26, ERG27 and ERG28. ERG28 acts as a scaffold to tether ERG27 and other 4,4-demethylation-related enzymes, forming a demethylation enzyme complex, in the endoplasmic reticulum. Interacts with ERG25 and ERG28. Also interacts with ERG7, but only in lipid particles.

It is found in the endoplasmic reticulum membrane. It localises to the lipid droplet. The enzyme catalyses 3-dehydro-4alpha-methylzymosterol + NADPH + H(+) = 4alpha-methylzymosterol + NADP(+). The protein operates within steroid biosynthesis; zymosterol biosynthesis; zymosterol from lanosterol: step 5/6. Functionally, 3-keto-steroid reductase; part of the third module of ergosterol biosynthesis pathway that includes the late steps of the pathway. ERG27 is a catalytic component of the C-4 demethylation complex that catalyzes the reduction of the keto group on the C-3. The third module or late pathway involves the ergosterol synthesis itself through consecutive reactions that mainly occur in the endoplasmic reticulum (ER) membrane. Firstly, the squalene synthase ERG9 catalyzes the condensation of 2 farnesyl pyrophosphate moieties to form squalene, which is the precursor of all steroids. Squalene synthase is crucial for balancing the incorporation of farnesyl diphosphate (FPP) into sterol and nonsterol isoprene synthesis. Secondly, the squalene epoxidase ERG1 catalyzes the stereospecific oxidation of squalene to (S)-2,3-epoxysqualene, which is considered to be a rate-limiting enzyme in steroid biosynthesis. Then, the lanosterol synthase ERG7 catalyzes the cyclization of (S)-2,3 oxidosqualene to lanosterol, a reaction that forms the sterol core. In the next steps, lanosterol is transformed to zymosterol through a complex process involving various demethylation, reduction and desaturation reactions. The lanosterol 14-alpha-demethylase ERG11 (also known as CYP51) catalyzes C14-demethylation of lanosterol to produce 4,4'-dimethyl cholesta-8,14,24-triene-3-beta-ol, which is critical for ergosterol biosynthesis. The C-14 reductase ERG24 reduces the C14=C15 double bond of 4,4-dimethyl-cholesta-8,14,24-trienol to produce 4,4-dimethyl-cholesta-8,24-dienol. 4,4-dimethyl-cholesta-8,24-dienol is substrate of the C-4 demethylation complex ERG25-ERG26-ERG27 in which ERG25 catalyzes the three-step monooxygenation required for the demethylation of 4,4-dimethyl and 4alpha-methylsterols, ERG26 catalyzes the oxidative decarboxylation that results in a reduction of the 3-beta-hydroxy group at the C-3 carbon to an oxo group, and ERG27 is responsible for the reduction of the keto group on the C-3. ERG28 has a role as a scaffold to help anchor ERG25, ERG26 and ERG27 to the endoplasmic reticulum and ERG29 regulates the activity of the iron-containing C4-methylsterol oxidase ERG25. Then, the sterol 24-C-methyltransferase ERG6 catalyzes the methyl transfer from S-adenosyl-methionine to the C-24 of zymosterol to form fecosterol. The C-8 sterol isomerase ERG2 catalyzes the reaction which results in unsaturation at C-7 in the B ring of sterols and thus converts fecosterol to episterol. The sterol-C5-desaturase ERG3 then catalyzes the introduction of a C-5 double bond in the B ring to produce 5-dehydroepisterol. The C-22 sterol desaturase ERG5 further converts 5-dehydroepisterol into ergosta-5,7,22,24(28)-tetraen-3beta-ol by forming the C-22(23) double bond in the sterol side chain. Finally, ergosta-5,7,22,24(28)-tetraen-3beta-ol is substrate of the C-24(28) sterol reductase ERG4 to produce ergosterol. Its function is as follows. Facilitates the association of ERG7 with lipid particles preventing its digestion in the endoplasmic reticulum and the lipid particles. The polypeptide is 3-keto-steroid reductase ERG27 (Candida albicans (Yeast)).